Consider the following 1046-residue polypeptide: FERM, ARHGEF and pleckstrin domain-containing protein 1 (1046 aa).

In terms of domain architecture, FERM spans 40–320 (ISIKIQMLDD…EHHAFFRLFE (281 aa)). Positions 374–522 (LTAQPSEQHA…LISPLLNDPS (149 aa)) are disordered. A compositionally biased stretch (basic and acidic residues) spans 413–424 (KELKASTEDTGQ). A compositionally biased stretch (polar residues) spans 458–513 (RMQQNRPQSQQPSTAGSLTGSPHLSELSINSQGGPSVANMSLSPNLSPDAKQSSPL). Residues 541-732 (KAYFIAKEVA…TEMMAQLHGN (192 aa)) enclose the DH domain. The PH 1 domain occupies 761–858 (EFIRLGSLSK…WIEDIQMAID (98 aa)). Residues 864–907 (SDPVPELLASSPPDNKSPDETTVDQESEDDLSASRTSLERQSPH) form a disordered region. The segment covering 884–894 (TTVDQESEDDL) has biased composition (acidic residues). Positions 933-1030 (ENQLSGNLLR…WMEVIRSATS (98 aa)) constitute a PH 2 domain.

In terms of assembly, interacts with PLXNA4. In terms of tissue distribution, detected in lateral motor column motor neurons and in preganglionic autonomic motor neurons of the column of Terni in the embryonic spinal cord (at protein level).

Its subcellular location is the cell membrane. The protein resides in the synapse. It localises to the synaptosome. The protein localises to the cytoplasm. It is found in the cytosol. Its subcellular location is the cell projection. The protein resides in the filopodium. It localises to the dendrite. The protein localises to the dendritic spine. Functions as a guanine nucleotide exchange factor for RAC1. Plays a role in semaphorin signaling via its interaction with PLXNA4. Plays a role in the assembly and disassembly of dendritic filopodia, the formation of dendritic spines, regulation of dendrite length and ultimately the formation of synapses. This Gallus gallus (Chicken) protein is FERM, ARHGEF and pleckstrin domain-containing protein 1 (FARP1).